A 394-amino-acid polypeptide reads, in one-letter code: Elongation factor Tu (394 aa).

The 195-residue stretch at Lys-10–Thr-204 folds into the tr-type G domain. Residues Gly-19 to Thr-26 form a G1 region. Gly-19–Thr-26 contacts GTP. Thr-26 contacts Mg(2+). The segment at Gly-60 to Asn-64 is G2. The G3 stretch occupies residues Asp-81 to Gly-84. GTP contacts are provided by residues Asp-81–His-85 and Asn-136–Asp-139. The segment at Asn-136 to Asp-139 is G4. The interval Ser-174–Leu-176 is G5.

It belongs to the TRAFAC class translation factor GTPase superfamily. Classic translation factor GTPase family. EF-Tu/EF-1A subfamily. Monomer.

The protein resides in the cytoplasm. The catalysed reaction is GTP + H2O = GDP + phosphate + H(+). In terms of biological role, GTP hydrolase that promotes the GTP-dependent binding of aminoacyl-tRNA to the A-site of ribosomes during protein biosynthesis. The sequence is that of Elongation factor Tu from Mycoplasma genitalium (strain ATCC 33530 / DSM 19775 / NCTC 10195 / G37) (Mycoplasmoides genitalium).